We begin with the raw amino-acid sequence, 360 residues long: Peptide chain release factor 1 (360 aa).

N5-methylglutamine is present on Q235. Residues 284-303 form a disordered region; the sequence is RERQSKEAAERKSLVGSGDR.

The protein belongs to the prokaryotic/mitochondrial release factor family. Methylated by PrmC. Methylation increases the termination efficiency of RF1.

The protein localises to the cytoplasm. Functionally, peptide chain release factor 1 directs the termination of translation in response to the peptide chain termination codons UAG and UAA. The protein is Peptide chain release factor 1 of Bordetella avium (strain 197N).